The sequence spans 587 residues: Protein NRT1/ PTR FAMILY 2.9 (587 aa).

12 helical membrane-spanning segments follow: residues 35 to 55 (FEKL…TTVF), 65 to 85 (VVNI…FLCD), 94 to 114 (LSFA…TAVI), 135 to 155 (IGQI…AGGI), 181 to 201 (FFNW…TLIV), 209 to 229 (WSIG…IFFA), 325 to 345 (CVIR…AYIQ), 368 to 388 (IPAG…IPIY), 412 to 432 (VGAG…VEQY), 457 to 477 (GMWL…AGVG), 493 to 513 (FAGS…TFLL), and 540 to 560 (YFYF…LLVS).

The protein belongs to the major facilitator superfamily. Proton-dependent oligopeptide transporter (POT/PTR) (TC 2.A.17) family. Expressed in roots, stems and major veins of the leaves. Detected in the companion cells of the root phloem.

The protein resides in the cell membrane. Low-affinity nitrate transporter facilitating nitrate loading into root phloem. Not involved in dipeptides transport, but has a weak glucosinolate transport activity. This is Protein NRT1/ PTR FAMILY 2.9 (NPF2.9) from Arabidopsis thaliana (Mouse-ear cress).